We begin with the raw amino-acid sequence, 1073 residues long: MAEIIHHSNVFTWAFHVSEYDGAPLLLLGSFSSVASVSLKRSGDLLLFERFTLPARTRSVALLSSHFLQSESGRHSIANILIATENGKCYLLQLVKTPEKAFPTIRIRDEFVLDTRMYNHEQLGKSIDLCPNASLWATNSFAGDIVFFFSHHPSLSKQVFAQLSIDGIILHTIFVPPKRSSSSCVTYVCLFLDSNSNPRINVYRWSKTETFSDASSYITFSIPVPSEFSLASHIIPCSNIPDHFLVLLETKICLLSVPQIECGDLKFLQTDLPCSGSHNYPLSIANDNETPNCCYLTYENGDLYRIRYSILSIDINLIGKTGSSLGNLILPCYPYIVFCGDCSDTLVYDVSVSPMSFFGSLIACAPMWDFVYSSSRHNTLLDEDINCNTVYATAGIGKSGCLVTMRYGCSSTTLLEAILTEGAVLSGIINSNHNSEFYAWLTYPWQTQILRLHLDGVVEDVTESLFLDDIKALYVINYQNTFIIITGKSIYAVTPSCTKYNLLEVSGDEEFVLAAYNELIFIVKKDLMNFKSQLLTLKLNTLSNGTLELQSLPDSFDLHDVPTCITSFSLERKLLVILVHPSPYFECVFYDETSHSSVYKVPLTGFQFGYLPHSISYLRKSNRAVYVLISSNSTLLTVYVTLTLEGVPDFKVYSNPISTDLPLTLQSPSDEFSTIYAWSDYLYIVGIDMETEQPTLNQILEVNDSFTCVSGIYDIPNKFQNSESRIIVYYSNNTLYLSELWLPQRTFSSKLNLAATPKRLLVDKYTNTLIIGCCHVLVNEITTSGLAFYDLTNSRLFPVNWPSMDIKGKPIFKPEELLYSMSFWIVADDQKRKYRYLCIGTGVRKNGLTTGRLLILTMNKDHDSNAIELRNVITINMKDPIYSVCSIGKHGLCYATGRKIGVKMLDLDSKKFCNSDCELPVRSPIVSMSTYKDYVYTSSLRDSVAVFQYDSENNSLNLVCSDTSSRLGIDCFYISQKKLLFSCDKDRLLTCFKVEGEVCTSTREQMLQPILTTVSQTKTNALTNHLKYSVIRVDKDNHNIVWGLMGCTLDGNIFKILMPNDPTSSDTIIYSDT.

Residues 1 to 36 (MAEIIHHSNVFTWAFHVSEYDGAPLLLLGSFSSVAS) form the signal peptide. N-linked (GlcNAc...) asparagine glycosylation occurs at N132. 392 to 399 (ATAGIGKS) is an ATP binding site. N-linked (GlcNAc...) asparagine glycans are attached at residues N544, N632, N703, N732, and N953.

This is an uncharacterized protein from Schizosaccharomyces pombe (strain 972 / ATCC 24843) (Fission yeast).